Consider the following 324-residue polypeptide: Ribosomal RNA small subunit methyltransferase H (324 aa).

Residues 40-42, Asp-60, Leu-94, Asp-108, and His-115 each bind S-adenosyl-L-methionine; that span reads AGH. The segment at 301 to 324 is disordered; that stretch reads EEMKVNTRSRSAKLRVAERTGEDG. Residues 315–324 show a composition bias toward basic and acidic residues; it reads RVAERTGEDG.

Belongs to the methyltransferase superfamily. RsmH family.

It is found in the cytoplasm. It catalyses the reaction cytidine(1402) in 16S rRNA + S-adenosyl-L-methionine = N(4)-methylcytidine(1402) in 16S rRNA + S-adenosyl-L-homocysteine + H(+). Its function is as follows. Specifically methylates the N4 position of cytidine in position 1402 (C1402) of 16S rRNA. In Maridesulfovibrio salexigens (strain ATCC 14822 / DSM 2638 / NCIMB 8403 / VKM B-1763) (Desulfovibrio salexigens), this protein is Ribosomal RNA small subunit methyltransferase H.